A 483-amino-acid polypeptide reads, in one-letter code: Aspartyl/glutamyl-tRNA(Asn/Gln) amidotransferase subunit B (483 aa).

This sequence belongs to the GatB/GatE family. GatB subfamily. In terms of assembly, heterotrimer of A, B and C subunits.

It catalyses the reaction L-glutamyl-tRNA(Gln) + L-glutamine + ATP + H2O = L-glutaminyl-tRNA(Gln) + L-glutamate + ADP + phosphate + H(+). It carries out the reaction L-aspartyl-tRNA(Asn) + L-glutamine + ATP + H2O = L-asparaginyl-tRNA(Asn) + L-glutamate + ADP + phosphate + 2 H(+). Allows the formation of correctly charged Asn-tRNA(Asn) or Gln-tRNA(Gln) through the transamidation of misacylated Asp-tRNA(Asn) or Glu-tRNA(Gln) in organisms which lack either or both of asparaginyl-tRNA or glutaminyl-tRNA synthetases. The reaction takes place in the presence of glutamine and ATP through an activated phospho-Asp-tRNA(Asn) or phospho-Glu-tRNA(Gln). The chain is Aspartyl/glutamyl-tRNA(Asn/Gln) amidotransferase subunit B from Rickettsia rickettsii (strain Sheila Smith).